We begin with the raw amino-acid sequence, 266 residues long: Small ribosomal subunit protein eS1 (266 aa).

Positions 233–266 (GEGGGSSAAKPSGDDTGAKVDRADGYEPPIQETV) are disordered. A compositionally biased stretch (basic and acidic residues) spans 244-257 (SGDDTGAKVDRADG).

This sequence belongs to the eukaryotic ribosomal protein eS1 family. In terms of assembly, component of the small ribosomal subunit. Mature ribosomes consist of a small (40S) and a large (60S) subunit. The 40S subunit contains about 33 different proteins and 1 molecule of RNA (18S). The 60S subunit contains about 49 different proteins and 3 molecules of RNA (28S, 5.8S and 5S). Part of the small subunit (SSU) processome, composed of more than 70 proteins and the RNA chaperone small nucleolar RNA (snoRNA) U3.

Its subcellular location is the cytoplasm. The protein localises to the nucleus. It localises to the nucleolus. Component of the small ribosomal subunit. The ribosome is a large ribonucleoprotein complex responsible for the synthesis of proteins in the cell. Part of the small subunit (SSU) processome, first precursor of the small eukaryotic ribosomal subunit. During the assembly of the SSU processome in the nucleolus, many ribosome biogenesis factors, an RNA chaperone and ribosomal proteins associate with the nascent pre-rRNA and work in concert to generate RNA folding, modifications, rearrangements and cleavage as well as targeted degradation of pre-ribosomal RNA by the RNA exosome. May play a role during erythropoiesis. In Salmo salar (Atlantic salmon), this protein is Small ribosomal subunit protein eS1 (rps3a).